Reading from the N-terminus, the 103-residue chain is Small ribosomal subunit protein uS14c (103 aa).

The interval 27–56 (SKKKIRSKVSPLSLSEKTKMQEKLQSLPRN) is disordered.

The protein belongs to the universal ribosomal protein uS14 family. As to quaternary structure, part of the 30S ribosomal subunit.

The protein resides in the plastid. The protein localises to the chloroplast. Its function is as follows. Binds 16S rRNA, required for the assembly of 30S particles. The polypeptide is Small ribosomal subunit protein uS14c (Zea mays (Maize)).